The sequence spans 409 residues: Arginine deiminase (409 aa).

Residue cysteine 399 is the Amidino-cysteine intermediate of the active site.

This sequence belongs to the arginine deiminase family.

The protein resides in the cytoplasm. The catalysed reaction is L-arginine + H2O = L-citrulline + NH4(+). It participates in amino-acid degradation; L-arginine degradation via ADI pathway; carbamoyl phosphate from L-arginine: step 1/2. The sequence is that of Arginine deiminase from Streptococcus pneumoniae (strain 70585).